A 402-amino-acid polypeptide reads, in one-letter code: MTTATDGSADGRLRVLVLGSTGSIGTQALEVIAANPDRFEVVGLAAGGSNLDTLLRQRAETGVTEIAIADERAAQLAGDIAYQGPDAVTRLVEETEADVVLNALVGALGLRPTLAALASGARLALANKESLVAGGPLVLQAAQPGQIVPVDSEHSALAQCLRAGTPDEVAKLVLTASGGPFRGWSAADLQEVTPEQAGAHPTWSMGPMNTLNSASLVNKGLELIETHLLFGIPYERIEVVVHPQSIVHSMVTFVDGSTIAQASPPDMKLPISLALGWPRRVPGAARYCDFSQAQTWEFEPLDDEVFPAVELARHAGETGGCMTAVYNAANEEAAAAFLAGRISFPAIVGTIADVLHAADQWAVSPANVDDVLDAQRWARQRAQRAIAKASPAGACEKVSGLA.

Positions 21, 22, 23, 24, 47, 50, and 127 each coordinate NADPH. Lysine 128 contacts 1-deoxy-D-xylulose 5-phosphate. Glutamate 129 contributes to the NADPH binding site. Residue aspartate 151 participates in Mn(2+) binding. The 1-deoxy-D-xylulose 5-phosphate site is built by serine 152, glutamate 153, serine 177, and histidine 200. Glutamate 153 contributes to the Mn(2+) binding site. Glycine 206 contacts NADPH. Residues serine 213, asparagine 218, lysine 219, and glutamate 222 each contribute to the 1-deoxy-D-xylulose 5-phosphate site. Glutamate 222 serves as a coordination point for Mn(2+).

The protein belongs to the DXR family. The cofactor is Mg(2+). Mn(2+) is required as a cofactor.

The catalysed reaction is 2-C-methyl-D-erythritol 4-phosphate + NADP(+) = 1-deoxy-D-xylulose 5-phosphate + NADPH + H(+). Its pathway is isoprenoid biosynthesis; isopentenyl diphosphate biosynthesis via DXP pathway; isopentenyl diphosphate from 1-deoxy-D-xylulose 5-phosphate: step 1/6. In terms of biological role, catalyzes the NADPH-dependent rearrangement and reduction of 1-deoxy-D-xylulose-5-phosphate (DXP) to 2-C-methyl-D-erythritol 4-phosphate (MEP). This chain is 1-deoxy-D-xylulose 5-phosphate reductoisomerase, found in Mycobacterium marinum (strain ATCC BAA-535 / M).